A 388-amino-acid polypeptide reads, in one-letter code: UPF0496 protein 1 (388 aa).

The segment at 1-25 (MGNSSSSGSHRPPRPASSESALPPA) is disordered. Residues 198-227 (QAVYRQQLTMLEKLQQRKHRLDKKVRAIKA) adopt a coiled-coil conformation. A run of 2 helical transmembrane segments spans residues 234-254 (IIFA…AAIA) and 257-277 (PVAA…GKWI). Residues 344 to 376 (VEEIKKKLEVFMKSVEDLGEQADRCSRDIRRAR) are a coiled coil.

This sequence belongs to the UPF0496 family.

The protein resides in the membrane. This is UPF0496 protein 1 from Oryza sativa subsp. japonica (Rice).